The chain runs to 96 residues: ATP synthase subunit c (96 aa).

Helical transmembrane passes span 28–50 (LGAG…NIGA) and 75–95 (AVTE…LFVL).

It belongs to the ATPase C chain family. F-type ATPases have 2 components, F(1) - the catalytic core - and F(0) - the membrane proton channel. F(1) has five subunits: alpha(3), beta(3), gamma(1), delta(1), epsilon(1). F(0) has three main subunits: a(1), b(2) and c(10-14). The alpha and beta chains form an alternating ring which encloses part of the gamma chain. F(1) is attached to F(0) by a central stalk formed by the gamma and epsilon chains, while a peripheral stalk is formed by the delta and b chains.

The protein localises to the cell inner membrane. F(1)F(0) ATP synthase produces ATP from ADP in the presence of a proton or sodium gradient. F-type ATPases consist of two structural domains, F(1) containing the extramembraneous catalytic core and F(0) containing the membrane proton channel, linked together by a central stalk and a peripheral stalk. During catalysis, ATP synthesis in the catalytic domain of F(1) is coupled via a rotary mechanism of the central stalk subunits to proton translocation. Its function is as follows. Key component of the F(0) channel; it plays a direct role in translocation across the membrane. A homomeric c-ring of between 10-14 subunits forms the central stalk rotor element with the F(1) delta and epsilon subunits. The protein is ATP synthase subunit c of Petrotoga mobilis (strain DSM 10674 / SJ95).